The following is a 228-amino-acid chain: MTIITPITNDPTTALLRLMAWLSPVFPVGSFSYSHGLERAVHDGLVVDAAGLQDWLQWLVRRGSGWNDAVLCAESWRCAMKGEDLHEIAELAEALAGSRERHMETMLQGGAFFAAARSWPCEIFDRLPPDCAYPVAVGAVAGGHGVPLAQALAAFLQAFCINLLQASIRLSVTGQSGVTAIMAALEPVLGETAARAALSSMEDLGSATFIADIMAMKHETQHSRLFRS.

Belongs to the UreF family. As to quaternary structure, ureD, UreF and UreG form a complex that acts as a GTP-hydrolysis-dependent molecular chaperone, activating the urease apoprotein by helping to assemble the nickel containing metallocenter of UreC. The UreE protein probably delivers the nickel.

The protein localises to the cytoplasm. Required for maturation of urease via the functional incorporation of the urease nickel metallocenter. Its function is as follows. Disruption of the ure1 gene cluster suggests that it protects brucellae during their passage through the stomach. The major route of infection in human brucellosis is oral. The sequence is that of Urease accessory protein UreF 1 from Brucella abortus (strain 2308).